The sequence spans 361 residues: UDP-N-acetylglucosamine--N-acetylmuramyl-(pentapeptide) pyrophosphoryl-undecaprenol N-acetylglucosamine transferase (361 aa).

UDP-N-acetyl-alpha-D-glucosamine contacts are provided by residues 12-14, Asn124, Arg163, Ser189, Ile241, 260-265, and Gln286; these read TGG and ALTVSE.

Belongs to the glycosyltransferase 28 family. MurG subfamily.

The protein resides in the cell inner membrane. It carries out the reaction di-trans,octa-cis-undecaprenyl diphospho-N-acetyl-alpha-D-muramoyl-L-alanyl-D-glutamyl-meso-2,6-diaminopimeloyl-D-alanyl-D-alanine + UDP-N-acetyl-alpha-D-glucosamine = di-trans,octa-cis-undecaprenyl diphospho-[N-acetyl-alpha-D-glucosaminyl-(1-&gt;4)]-N-acetyl-alpha-D-muramoyl-L-alanyl-D-glutamyl-meso-2,6-diaminopimeloyl-D-alanyl-D-alanine + UDP + H(+). The protein operates within cell wall biogenesis; peptidoglycan biosynthesis. Its function is as follows. Cell wall formation. Catalyzes the transfer of a GlcNAc subunit on undecaprenyl-pyrophosphoryl-MurNAc-pentapeptide (lipid intermediate I) to form undecaprenyl-pyrophosphoryl-MurNAc-(pentapeptide)GlcNAc (lipid intermediate II). This is UDP-N-acetylglucosamine--N-acetylmuramyl-(pentapeptide) pyrophosphoryl-undecaprenol N-acetylglucosamine transferase from Aeromonas hydrophila subsp. hydrophila (strain ATCC 7966 / DSM 30187 / BCRC 13018 / CCUG 14551 / JCM 1027 / KCTC 2358 / NCIMB 9240 / NCTC 8049).